The primary structure comprises 438 residues: Putative metabolite transport protein HI_0281 (438 aa).

Over 1–17 (MSTQLRNNPMKVALASM) the chain is Cytoplasmic. The helical transmembrane segment at 18 to 38 (VGTAIEFFDYYIYAAAAVLVF) threads the bilayer. Topologically, residues 39–52 (NTQFFHSDDPLSND) are periplasmic. A helical membrane pass occupies residues 53-73 (LLSLSTLALAFFARPIGSALF). Residues 74 to 85 (GHFGDKIGRKKT) are Cytoplasmic-facing. A helical transmembrane segment spans residues 86–106 (LVASLVLMGGSTVVIGLLPNY). The Periplasmic segment spans residues 107–115 (AQIGIWAPI). Residues 116–136 (LLCVCRVGQGIGLGGEWGGAA) traverse the membrane as a helical segment. Topologically, residues 137-156 (LVATENAPEGKRAWYGTFPQ) are cytoplasmic. The helical transmembrane segment at 157–177 (LGAPIGLFVANGTFFLVSYLL) threads the bilayer. Topologically, residues 178–181 (GHNA) are periplasmic. The chain crosses the membrane as a helical span at residues 182-202 (LVEWAWRIPFVSSILLVAVGL). Residues 203-239 (YVRLTLHESHVFVEAEQKGKKLNAPVSVVFTKHLKPM) are Cytoplasmic-facing. A helical membrane pass occupies residues 240 to 260 (VIGTFIMVATYSLFYIMTAFA). Topologically, residues 261-286 (QAYSRTAPKLSEAGYALGLGIPANTF) are periplasmic. Residues 287 to 307 (TGLLLISAIVFGIFISISGFY) form a helical membrane-spanning segment. At 308-314 (ADKIGRR) the chain is on the cytoplasmic side. Residues 315–336 (KWLIWVTIAIGVLGLAMPLFLE) form a helical membrane-spanning segment. Residues 337 to 342 (NGTPVS) are Periplasmic-facing. The helical transmembrane segment at 343-363 (VFAFLVIGMAIMGMTFGPMAA) threads the bilayer. Topologically, residues 364-377 (LLPELFPTEVRYSG) are cytoplasmic. The chain crosses the membrane as a helical span at residues 378-398 (ASLAYNLASIIGATIAAMISL). The Periplasmic portion of the chain corresponds to 399-405 (KINASFG). A helical membrane pass occupies residues 406–426 (VMGVGIYLAINALMTFLALLA). The Cytoplasmic segment spans residues 427-438 (SKETKNVDLTEI).

The protein belongs to the major facilitator superfamily. Sugar transporter (TC 2.A.1.1) family.

It is found in the cell inner membrane. This is Putative metabolite transport protein HI_0281 from Haemophilus influenzae (strain ATCC 51907 / DSM 11121 / KW20 / Rd).